The sequence spans 159 residues: NADH-quinone oxidoreductase subunit B 2 (159 aa).

4 residues coordinate [4Fe-4S] cluster: Cys37, Cys38, Cys102, and Cys132.

Belongs to the complex I 20 kDa subunit family. In terms of assembly, NDH-1 is composed of 14 different subunits. Subunits NuoB, C, D, E, F, and G constitute the peripheral sector of the complex. [4Fe-4S] cluster serves as cofactor.

It localises to the cell inner membrane. It carries out the reaction a quinone + NADH + 5 H(+)(in) = a quinol + NAD(+) + 4 H(+)(out). Functionally, NDH-1 shuttles electrons from NADH, via FMN and iron-sulfur (Fe-S) centers, to quinones in the respiratory chain. Couples the redox reaction to proton translocation (for every two electrons transferred, four hydrogen ions are translocated across the cytoplasmic membrane), and thus conserves the redox energy in a proton gradient. In Azoarcus sp. (strain BH72), this protein is NADH-quinone oxidoreductase subunit B 2.